The sequence spans 332 residues: Succinylglutamate desuccinylase (332 aa).

Positions 59, 62, and 151 each coordinate Zn(2+). Glutamate 215 is a catalytic residue.

The protein belongs to the AspA/AstE family. Succinylglutamate desuccinylase subfamily. The cofactor is Zn(2+).

It catalyses the reaction N-succinyl-L-glutamate + H2O = L-glutamate + succinate. The protein operates within amino-acid degradation; L-arginine degradation via AST pathway; L-glutamate and succinate from L-arginine: step 5/5. Functionally, transforms N(2)-succinylglutamate into succinate and glutamate. The chain is Succinylglutamate desuccinylase from Pseudomonas aeruginosa (strain UCBPP-PA14).